The chain runs to 383 residues: S-adenosylmethionine synthase (383 aa).

H15 serves as a coordination point for ATP. D17 contacts Mg(2+). E43 serves as a coordination point for K(+). L-methionine-binding residues include E56 and Q99. The interval 99–109 (QSPDINQGVDK) is flexible loop. ATP contacts are provided by residues 164–166 (DAK), 230–231 (RF), D239, 245–246 (RK), A262, and K266. L-methionine is bound at residue D239. K270 is an L-methionine binding site.

It belongs to the AdoMet synthase family. Homotetramer; dimer of dimers. Mg(2+) serves as cofactor. K(+) is required as a cofactor.

It localises to the cytoplasm. The enzyme catalyses L-methionine + ATP + H2O = S-adenosyl-L-methionine + phosphate + diphosphate. The protein operates within amino-acid biosynthesis; S-adenosyl-L-methionine biosynthesis; S-adenosyl-L-methionine from L-methionine: step 1/1. In terms of biological role, catalyzes the formation of S-adenosylmethionine (AdoMet) from methionine and ATP. The overall synthetic reaction is composed of two sequential steps, AdoMet formation and the subsequent tripolyphosphate hydrolysis which occurs prior to release of AdoMet from the enzyme. The sequence is that of S-adenosylmethionine synthase from Vibrio atlanticus (strain LGP32) (Vibrio splendidus (strain Mel32)).